The chain runs to 274 residues: F-actin-capping protein subunit alpha (274 aa).

Belongs to the F-actin-capping protein alpha subunit family. As to quaternary structure, heterodimer of an alpha and a beta subunit.

Its subcellular location is the cytoplasm. Functionally, F-actin-capping proteins bind in a Ca(2+)-independent manner to the fast growing ends of actin filaments (barbed end) thereby blocking the exchange of subunits at these ends. Unlike other capping proteins (such as gelsolin and severin), these proteins do not sever actin filaments. This chain is F-actin-capping protein subunit alpha, found in Chaetomium thermophilum (strain DSM 1495 / CBS 144.50 / IMI 039719) (Thermochaetoides thermophila).